The primary structure comprises 582 residues: MANQIDEAKPISDLEIMRHSAAHIMAEAVLSMFPEAKLGIGPAIDTGFYYDFDLPRTLTPEDLPEIETRMNQLVKANLPFRREEMSKDEARKLFADQPYKLELLDDIPDEIVSVYRQGNLCDLCRGPHVNYTSKVKAFKLLSIAGAYWRGDEKRPMLQRIYGAAFLDKASLAEYLNMLEESAKRDHRKLGKELELFSLHQEIGGGLVNWLPNGAIVRHLIEEFWKKEHLKRGYSLVYTPHIAKVDLWKTSGHWGFYRENMYSPMDIDGEEYVLKPMNCVYHILMFKNRTRSYKELPIRMAELGTVYRYERSGVLHGLSRVRGFTQDDAHIFCLYEQLEKEVVKVLDLAKFMIDTFGFTRYKVMLSTRPEKYVGELDKWEYATDILAKALESNQIAYQVDPGEGVFYGPKIDIKFEDALGRAWQGPTIQVDFQLPERFDVSVVGEDGKDQPVAMVHRTVLGSMERFMSCLTEQYGGAFPVWLSPKQVMLIPIADRHSEFAEKLACELREEEVRVEVDNRSETMNQKIRQAQLAKIPYMLVVGDKEIETQSVSIRTRSGSQCVMPFAEFKSMLIDKIKTKSTEI.

Residues 185–478 (DHRKLGKELE…LTEQYGGAFP (294 aa)) form a catalytic region. Zn(2+)-binding residues include cysteine 278, histidine 329, and histidine 455.

It belongs to the class-II aminoacyl-tRNA synthetase family. Homodimer. The cofactor is Zn(2+).

Its subcellular location is the cytoplasm. The enzyme catalyses tRNA(Thr) + L-threonine + ATP = L-threonyl-tRNA(Thr) + AMP + diphosphate + H(+). Its function is as follows. Catalyzes the attachment of threonine to tRNA(Thr) in a two-step reaction: L-threonine is first activated by ATP to form Thr-AMP and then transferred to the acceptor end of tRNA(Thr). Also edits incorrectly charged L-seryl-tRNA(Thr). This chain is Threonine--tRNA ligase, found in Dehalococcoides mccartyi (strain ATCC BAA-2266 / KCTC 15142 / 195) (Dehalococcoides ethenogenes (strain 195)).